The sequence spans 67 residues: Large ribosomal subunit protein uL29 (67 aa).

It belongs to the universal ribosomal protein uL29 family.

The polypeptide is Large ribosomal subunit protein uL29 (Agathobacter rectalis (strain ATCC 33656 / DSM 3377 / JCM 17463 / KCTC 5835 / VPI 0990) (Eubacterium rectale)).